The chain runs to 434 residues: 3-phosphoshikimate 1-carboxyvinyltransferase (434 aa).

3-phosphoshikimate-binding residues include lysine 22, serine 23, and arginine 27. Lysine 22 contributes to the phosphoenolpyruvate binding site. Phosphoenolpyruvate-binding residues include glycine 93 and arginine 121. 3-phosphoshikimate is bound by residues serine 168, serine 169, glutamine 170, serine 199, aspartate 320, and lysine 347. Glutamine 170 is a binding site for phosphoenolpyruvate. Residue aspartate 320 is the Proton acceptor of the active site. Residues arginine 351, arginine 394, and lysine 419 each coordinate phosphoenolpyruvate.

The protein belongs to the EPSP synthase family. As to quaternary structure, monomer.

The protein resides in the cytoplasm. The catalysed reaction is 3-phosphoshikimate + phosphoenolpyruvate = 5-O-(1-carboxyvinyl)-3-phosphoshikimate + phosphate. Its pathway is metabolic intermediate biosynthesis; chorismate biosynthesis; chorismate from D-erythrose 4-phosphate and phosphoenolpyruvate: step 6/7. In terms of biological role, catalyzes the transfer of the enolpyruvyl moiety of phosphoenolpyruvate (PEP) to the 5-hydroxyl of shikimate-3-phosphate (S3P) to produce enolpyruvyl shikimate-3-phosphate and inorganic phosphate. The polypeptide is 3-phosphoshikimate 1-carboxyvinyltransferase (Burkholderia cenocepacia (strain HI2424)).